The chain runs to 476 residues: Raffinose invertase (476 aa).

Residues 35–38, glutamine 54, 97–98, 159–160, glutamate 214, and tryptophan 297 contribute to the substrate site; these read WMND, FS, and RD. Aspartate 38 is a catalytic residue.

Belongs to the glycosyl hydrolase 32 family. Homodimer.

The enzyme catalyses Hydrolysis of terminal non-reducing beta-D-fructofuranoside residues in beta-D-fructofuranosides.. Its function is as follows. May prevent the potential hasard of excessive sucrose accumulation. The polypeptide is Raffinose invertase (rafD) (Escherichia coli).